A 1472-amino-acid polypeptide reads, in one-letter code: ABC transporter FGM5 (1472 aa).

Helical transmembrane passes span 32–52 (IILG…RVAT), 67–87 (FTKL…LILS), 100–120 (FAVA…ALSF), 163–183 (YAGV…LELQ), 197–217 (SPEE…IGIF), 271–291 (ALIV…GFQY), 316–336 (GLIG…ALFW), 386–406 (FHGL…CFLL), 412–432 (LAFI…TAIA), 493–513 (LLIM…VVAF), and 534–554 (LLTN…AAFV). Residues 284–551 (IAMIGFQYAQ…MFQSVPAVIA (268 aa)) form the ABC transmembrane type-1 1 domain. The region spanning 605–834 (ISIVDGSFGW…GIYIPTLGLS (230 aa)) is the ABC transporter 1 domain. An ATP-binding site is contributed by 638-645 (GPVASGKS). 5 N-linked (GlcNAc...) asparagine glycosylation sites follow: asparagine 682, asparagine 696, asparagine 763, asparagine 784, and asparagine 843. A run of 4 helical transmembrane segments spans residues 900 to 920 (LLSG…MGWW), 938 to 958 (LFRG…VIFM), 1003 to 1023 (GELP…FAMA), and 1024 to 1044 (VVVA…FSII). Residues 900–1139 (LLSGIMYAVG…VGVVAISTQL (240 aa)) form the ABC transmembrane type-1 2 domain. An N-linked (GlcNAc...) asparagine glycan is attached at asparagine 1101. The helical transmembrane segment at 1116–1136 (FLATFLNLIVMVLAVGVVAIS) threads the bilayer. One can recognise an ABC transporter 2 domain in the interval 1218–1468 (YKNDDESPAS…EGSWFSQLWA (251 aa)). Position 1255-1262 (1255-1262 (GRTGSGKS)) interacts with ATP. 2 N-linked (GlcNAc...) asparagine glycosylation sites follow: asparagine 1277 and asparagine 1293.

Belongs to the ABC transporter superfamily. ABCC family. Conjugate transporter (TC 3.A.1.208) subfamily.

It localises to the cell membrane. It functions in the pathway secondary metabolite biosynthesis. Functionally, ABC transporter; part of the Fg3_54/C64 gene cluster that mediates the biosynthesis of the octapeptide fusaoctaxin A, a virulence factor that is required for cell-to-cell invasiveness of plant host. The 2 nonribosomal peptide synthetases NRPS9 and NRPS5 form an assembly line which likely utilizes GABA as a starter unit (loaded on the unique module M1 of NRPS9) and sequentially incorporates seven extender units composed of the residues L-Ala, L-allo-Ile, L-Ser, L-Val, L-Ser, L-Leu and L-Leu, respectively. During the process, each of the residues that are tethered on modules M3-M7 of NRPS5 containing an E domain can undergo an epimerization reaction to produce a D-configuration before the transpeptidation reaction occurs. The elongation of the peptidyl chain might be terminated by module M8-mediated L-Leu incorporation, followed by R domain-catalyzed 4 electron reduction to release the resulting octapeptide from the assembly line as an alcohol. Fusaoctaxin A is cleaved by the cluster specific ABC transporter FGM5 to the pentapeptide fusapentaxin A and the tripeptide fusatrixin A. The other enzymes from the cluster, FGM1, FGM2, FGM3 and FGM9 seem not to be involved in the biosynthesis of fusaoctaxin A and their functions have still to be determined. The polypeptide is ABC transporter FGM5 (Gibberella zeae (strain ATCC MYA-4620 / CBS 123657 / FGSC 9075 / NRRL 31084 / PH-1) (Wheat head blight fungus)).